A 638-amino-acid polypeptide reads, in one-letter code: Dihydrolipoyllysine-residue acetyltransferase component of pyruvate dehydrogenase complex (638 aa).

Lipoyl-binding domains are found at residues 2 to 74 and 117 to 191; these read SEII…IELE and SQEV…LTLR. Residue Lys40 is modified to N6-lipoyllysine. The segment covering 90-117 has biased composition (low complexity); that stretch reads PAAPTQAVDEAEAPSPGASATPAPAAAS. Residues 90–119 form a disordered region; it reads PAAPTQAVDEAEAPSPGASATPAPAAASQE. Lys157 carries the N6-lipoyllysine modification. The disordered stretch occupies residues 201–220; sequence APAAAAAASPAPAPLAPAAA. Residues 222 to 296 enclose the Lipoyl-binding 3 domain; that stretch reads PQEVKVPDIG…GTGDQILTLR (75 aa). N6-lipoyllysine is present on Lys262. Low complexity predominate over residues 301–320; sequence APSGPRARGSPGQAAAAPGA. The disordered stretch occupies residues 301 to 336; sequence APSGPRARGSPGQAAAAPGAAPAPAPVGAPSRNGAK. A Peripheral subunit-binding (PSBD) domain is found at 338–375; that stretch reads HAGPAVRQLAREFGVELAAINSTGPRGRILKEDVQAYV. Residues 382–638 form a catalytic region; that stretch reads AKEAPAAGAA…LLADIRAILL (257 aa). His611 is a catalytic residue.

Belongs to the 2-oxoacid dehydrogenase family. Forms a 24-polypeptide structural core with octahedral symmetry. (R)-lipoate serves as cofactor.

It catalyses the reaction N(6)-[(R)-dihydrolipoyl]-L-lysyl-[protein] + acetyl-CoA = N(6)-[(R)-S(8)-acetyldihydrolipoyl]-L-lysyl-[protein] + CoA. In terms of biological role, the pyruvate dehydrogenase complex catalyzes the overall conversion of pyruvate to acetyl-CoA and CO(2). It contains multiple copies of three enzymatic components: pyruvate dehydrogenase (E1), dihydrolipoamide acetyltransferase (E2) and lipoamide dehydrogenase (E3). This Azotobacter vinelandii protein is Dihydrolipoyllysine-residue acetyltransferase component of pyruvate dehydrogenase complex.